The primary structure comprises 318 residues: NAD(P)H-dependent D-xylose reductase (318 aa).

Residue tyrosine 48 is the Proton donor of the active site. Histidine 110 lines the substrate pocket. NAD(+)-binding positions include 165-166, 214-223, and 270-280; these read SN, SSFGPQSFVE, and KSNTVPRLLEN.

This sequence belongs to the aldo/keto reductase family.

It catalyses the reaction xylitol + NAD(+) = D-xylose + NADH + H(+). It carries out the reaction xylitol + NADP(+) = D-xylose + NADPH + H(+). Its pathway is carbohydrate metabolism; D-xylose degradation. Its activity is regulated as follows. NADP(+) is a potent inhibitor of both the NADPH- and NADH-linked xylose reduction, whereas NAD(+) showS strong inhibition only with the NADH-linked reaction. Its function is as follows. Reduces D-xylose into xylitol. Has a preference for NADPH, but can also utilize NADH as cosubstrate. The sequence is that of NAD(P)H-dependent D-xylose reductase (XYL1) from Scheffersomyces stipitis (strain ATCC 58785 / CBS 6054 / NBRC 10063 / NRRL Y-11545) (Yeast).